The following is a 469-amino-acid chain: Glutamate--tRNA ligase 1 (469 aa).

Residues 8–18 (PSPTGYLHIGG) carry the 'HIGH' region motif. The tract at residues 117–137 (TPRYDGTWRPEPGKELPPVPA) is disordered. The 'KMSKS' region motif lies at 240 to 244 (KLSKR). Position 243 (lysine 243) interacts with ATP.

The protein belongs to the class-I aminoacyl-tRNA synthetase family. Glutamate--tRNA ligase type 1 subfamily. As to quaternary structure, monomer.

It localises to the cytoplasm. The catalysed reaction is tRNA(Glu) + L-glutamate + ATP = L-glutamyl-tRNA(Glu) + AMP + diphosphate. Catalyzes the attachment of glutamate to tRNA(Glu) in a two-step reaction: glutamate is first activated by ATP to form Glu-AMP and then transferred to the acceptor end of tRNA(Glu). This Aliarcobacter butzleri (strain RM4018) (Arcobacter butzleri) protein is Glutamate--tRNA ligase 1.